The following is a 257-amino-acid chain: Acetylglutamate kinase (257 aa).

Substrate is bound by residues 43–44 (GG), R65, and N157. Residues 180–185 (DISGIL) and 208–210 (IIT) contribute to the ATP site.

This sequence belongs to the acetylglutamate kinase family. ArgB subfamily. In terms of assembly, homodimer.

It localises to the cytoplasm. The catalysed reaction is N-acetyl-L-glutamate + ATP = N-acetyl-L-glutamyl 5-phosphate + ADP. The protein operates within amino-acid biosynthesis; L-arginine biosynthesis; N(2)-acetyl-L-ornithine from L-glutamate: step 2/4. Its function is as follows. Catalyzes the ATP-dependent phosphorylation of N-acetyl-L-glutamate. This chain is Acetylglutamate kinase, found in Sodalis glossinidius (strain morsitans).